We begin with the raw amino-acid sequence, 145 residues long: Gene 34.1 protein (145 aa).

In terms of biological role, putative excisionase. The sequence is that of Gene 34.1 protein (34.1) from Mycobacterium (Mycobacteriophage D29).